Reading from the N-terminus, the 64-residue chain is Large ribosomal subunit protein bL33 (64 aa).

It belongs to the bacterial ribosomal protein bL33 family.

The sequence is that of Large ribosomal subunit protein bL33 from Gloeothece citriformis (strain PCC 7424) (Cyanothece sp. (strain PCC 7424)).